The primary structure comprises 142 residues: Acidic phospholipase A2 Bc-PL (142 aa).

An N-terminal signal peptide occupies residues 1–9 (AVCVSLLGA). The propeptide occupies 10-17 (ANIPPQPL). Intrachain disulfides connect C28–C94, C44–C141, C46–C62, C61–C122, C68–C115, C78–C108, and C101–C113. Y45, G47, and G49 together coordinate Ca(2+). H65 is a catalytic residue. D66 provides a ligand contact to Ca(2+). The active site involves D116.

It belongs to the phospholipase A2 family. Group I subfamily. D49 sub-subfamily. Ca(2+) serves as cofactor. Expressed by the venom gland.

Its subcellular location is the secreted. It catalyses the reaction a 1,2-diacyl-sn-glycero-3-phosphocholine + H2O = a 1-acyl-sn-glycero-3-phosphocholine + a fatty acid + H(+). PLA2 catalyzes the calcium-dependent hydrolysis of the 2-acyl groups in 3-sn-phosphoglycerides. The protein is Acidic phospholipase A2 Bc-PL of Bungarus candidus (Malayan krait).